Reading from the N-terminus, the 176-residue chain is Ribosome maturation factor RimM (176 aa).

One can recognise a PRC barrel domain in the interval 97-176; that stretch reads EDEFYWRDLI…QITVDWDPDF (80 aa).

The protein belongs to the RimM family. As to quaternary structure, binds ribosomal protein uS19.

The protein resides in the cytoplasm. Functionally, an accessory protein needed during the final step in the assembly of 30S ribosomal subunit, possibly for assembly of the head region. Essential for efficient processing of 16S rRNA. May be needed both before and after RbfA during the maturation of 16S rRNA. It has affinity for free ribosomal 30S subunits but not for 70S ribosomes. This Shewanella sediminis (strain HAW-EB3) protein is Ribosome maturation factor RimM.